Reading from the N-terminus, the 544-residue chain is CTP synthase (544 aa).

Positions 1-267 (MSKFIFVTGG…GDLLVSRLHL (267 aa)) are amidoligase domain. Ser13 lines the CTP pocket. Ser13 contributes to the UTP binding site. 14–19 (SVGKGI) is an ATP binding site. L-glutamine is bound at residue Tyr54. Residue Asp71 participates in ATP binding. Positions 71 and 141 each coordinate Mg(2+). Residues 148–150 (DIE), 188–193 (KTKPTQ), and Lys224 contribute to the CTP site. UTP is bound by residues 188–193 (KTKPTQ) and Lys224. Residues 299 to 534 (YVELKDAYYS…INAAKKVIRD (236 aa)) form the Glutamine amidotransferase type-1 domain. Gly354 is a binding site for L-glutamine. The active-site Nucleophile; for glutamine hydrolysis is the Cys381. Residues 382 to 385 (LGMQ), Glu405, and Arg462 each bind L-glutamine. Catalysis depends on residues His507 and Glu509.

It belongs to the CTP synthase family. Homotetramer.

It catalyses the reaction UTP + L-glutamine + ATP + H2O = CTP + L-glutamate + ADP + phosphate + 2 H(+). The catalysed reaction is L-glutamine + H2O = L-glutamate + NH4(+). The enzyme catalyses UTP + NH4(+) + ATP = CTP + ADP + phosphate + 2 H(+). The protein operates within pyrimidine metabolism; CTP biosynthesis via de novo pathway; CTP from UDP: step 2/2. With respect to regulation, allosterically activated by GTP, when glutamine is the substrate; GTP has no effect on the reaction when ammonia is the substrate. The allosteric effector GTP functions by stabilizing the protein conformation that binds the tetrahedral intermediate(s) formed during glutamine hydrolysis. Inhibited by the product CTP, via allosteric rather than competitive inhibition. Its function is as follows. Catalyzes the ATP-dependent amination of UTP to CTP with either L-glutamine or ammonia as the source of nitrogen. Regulates intracellular CTP levels through interactions with the four ribonucleotide triphosphates. The sequence is that of CTP synthase from Dehalococcoides mccartyi (strain ATCC BAA-2100 / JCM 16839 / KCTC 5957 / BAV1).